The following is a 190-amino-acid chain: Isopentenyl-diphosphate Delta-isomerase (190 aa).

The Mn(2+) site is built by His27 and His34. One can recognise a Nudix hydrolase domain in the interval Ala32–Leu166. Residue Cys69 is part of the active site. A Mn(2+)-binding site is contributed by His71. A Mg(2+)-binding site is contributed by Glu89. Residues Glu116 and Glu118 each contribute to the Mn(2+) site. Glu118 is an active-site residue.

This sequence belongs to the IPP isomerase type 1 family. Mg(2+) is required as a cofactor. It depends on Mn(2+) as a cofactor.

The protein localises to the cytoplasm. It catalyses the reaction isopentenyl diphosphate = dimethylallyl diphosphate. It functions in the pathway isoprenoid biosynthesis; dimethylallyl diphosphate biosynthesis; dimethylallyl diphosphate from isopentenyl diphosphate: step 1/1. Functionally, catalyzes the 1,3-allylic rearrangement of the homoallylic substrate isopentenyl (IPP) to its highly electrophilic allylic isomer, dimethylallyl diphosphate (DMAPP). The polypeptide is Isopentenyl-diphosphate Delta-isomerase (Clavibacter sepedonicus (Clavibacter michiganensis subsp. sepedonicus)).